We begin with the raw amino-acid sequence, 89 residues long: Large ribosomal subunit protein bL27 (89 aa).

A disordered region spans residues M1 to G22.

It belongs to the bacterial ribosomal protein bL27 family.

In Brucella abortus (strain S19), this protein is Large ribosomal subunit protein bL27.